The chain runs to 324 residues: Biotin synthase (324 aa).

A Radical SAM core domain is found at 43–273; the sequence is FCGNYFNFCS…HVFLRLAGGR (231 aa). [4Fe-4S] cluster-binding residues include C61, C65, and C68. Residues S105, C138, C198, and R268 each contribute to the [2Fe-2S] cluster site.

This sequence belongs to the radical SAM superfamily. Biotin synthase family. As to quaternary structure, homodimer. [4Fe-4S] cluster serves as cofactor. It depends on [2Fe-2S] cluster as a cofactor.

It catalyses the reaction (4R,5S)-dethiobiotin + (sulfur carrier)-SH + 2 reduced [2Fe-2S]-[ferredoxin] + 2 S-adenosyl-L-methionine = (sulfur carrier)-H + biotin + 2 5'-deoxyadenosine + 2 L-methionine + 2 oxidized [2Fe-2S]-[ferredoxin]. The protein operates within cofactor biosynthesis; biotin biosynthesis; biotin from 7,8-diaminononanoate: step 2/2. In terms of biological role, catalyzes the conversion of dethiobiotin (DTB) to biotin by the insertion of a sulfur atom into dethiobiotin via a radical-based mechanism. The polypeptide is Biotin synthase (Campylobacter hominis (strain ATCC BAA-381 / DSM 21671 / CCUG 45161 / LMG 19568 / NCTC 13146 / CH001A)).